Here is a 975-residue protein sequence, read N- to C-terminus: Glycine dehydrogenase (decarboxylating) (975 aa).

Lysine 723 carries the post-translational modification N6-(pyridoxal phosphate)lysine.

It belongs to the GcvP family. In terms of assembly, the glycine cleavage system is composed of four proteins: P, T, L and H. Requires pyridoxal 5'-phosphate as cofactor.

It catalyses the reaction N(6)-[(R)-lipoyl]-L-lysyl-[glycine-cleavage complex H protein] + glycine + H(+) = N(6)-[(R)-S(8)-aminomethyldihydrolipoyl]-L-lysyl-[glycine-cleavage complex H protein] + CO2. Its function is as follows. The glycine cleavage system catalyzes the degradation of glycine. The P protein binds the alpha-amino group of glycine through its pyridoxal phosphate cofactor; CO(2) is released and the remaining methylamine moiety is then transferred to the lipoamide cofactor of the H protein. This is Glycine dehydrogenase (decarboxylating) from Burkholderia vietnamiensis (strain G4 / LMG 22486) (Burkholderia cepacia (strain R1808)).